A 356-amino-acid polypeptide reads, in one-letter code: Cytochrome b translation regulator cbp7 (356 aa).

In terms of assembly, component of a complex, at least composed of cbp7 and cbp8.

It localises to the mitochondrion. Translation factor for cob1/cytochrome b; plays a role in cob1 mRNA stabilization and required for correct folding of the protein. The polypeptide is Cytochrome b translation regulator cbp7 (Schizosaccharomyces pombe (strain 972 / ATCC 24843) (Fission yeast)).